Consider the following 616-residue polypeptide: Dihydroxy-acid dehydratase (616 aa).

A Mg(2+)-binding site is contributed by Asp-81. Position 122 (Cys-122) interacts with [2Fe-2S] cluster. Mg(2+)-binding residues include Asp-123 and Lys-124. At Lys-124 the chain carries N6-carboxylysine. Residue Cys-195 participates in [2Fe-2S] cluster binding. Residue Glu-491 participates in Mg(2+) binding. Ser-517 acts as the Proton acceptor in catalysis.

Belongs to the IlvD/Edd family. As to quaternary structure, homodimer. The cofactor is [2Fe-2S] cluster. Mg(2+) serves as cofactor.

The enzyme catalyses (2R)-2,3-dihydroxy-3-methylbutanoate = 3-methyl-2-oxobutanoate + H2O. It carries out the reaction (2R,3R)-2,3-dihydroxy-3-methylpentanoate = (S)-3-methyl-2-oxopentanoate + H2O. It participates in amino-acid biosynthesis; L-isoleucine biosynthesis; L-isoleucine from 2-oxobutanoate: step 3/4. It functions in the pathway amino-acid biosynthesis; L-valine biosynthesis; L-valine from pyruvate: step 3/4. In terms of biological role, functions in the biosynthesis of branched-chain amino acids. Catalyzes the dehydration of (2R,3R)-2,3-dihydroxy-3-methylpentanoate (2,3-dihydroxy-3-methylvalerate) into 2-oxo-3-methylpentanoate (2-oxo-3-methylvalerate) and of (2R)-2,3-dihydroxy-3-methylbutanoate (2,3-dihydroxyisovalerate) into 2-oxo-3-methylbutanoate (2-oxoisovalerate), the penultimate precursor to L-isoleucine and L-valine, respectively. The polypeptide is Dihydroxy-acid dehydratase (Salmonella newport (strain SL254)).